The chain runs to 167 residues: NADH-ubiquinone oxidoreductase chain 6 (167 aa).

The next 5 helical transmembrane spans lie at Met-1–Asn-21, Ser-23–Met-43, Met-47–Ala-67, Val-86–Gly-106, and Ala-133–Leu-153.

It belongs to the complex I subunit 6 family.

Its subcellular location is the mitochondrion membrane. It catalyses the reaction a ubiquinone + NADH + 5 H(+)(in) = a ubiquinol + NAD(+) + 4 H(+)(out). Core subunit of the mitochondrial membrane respiratory chain NADH dehydrogenase (Complex I) that is believed to belong to the minimal assembly required for catalysis. Complex I functions in the transfer of electrons from NADH to the respiratory chain. The immediate electron acceptor for the enzyme is believed to be ubiquinone. The sequence is that of NADH-ubiquinone oxidoreductase chain 6 (MT-ND6) from Polypterus ornatipinnis (Ornate bichir).